The primary structure comprises 176 residues: Transcription termination/antitermination protein NusG (176 aa).

A KOW domain is found at glycine 125–histidine 149.

Belongs to the NusG family.

Its function is as follows. Participates in transcription elongation, termination and antitermination. The sequence is that of Transcription termination/antitermination protein NusG from Helicobacter pylori (strain J99 / ATCC 700824) (Campylobacter pylori J99).